Consider the following 399-residue polypeptide: Leu/Ile/Val-binding protein homolog 7 (399 aa).

The first 22 residues, 1-22, serve as a signal peptide directing secretion; that stretch reads MEKHLIALSVAALLAGAAPASA.

Belongs to the leucine-binding protein family.

Functionally, component of an amino-acid transport system. This chain is Leu/Ile/Val-binding protein homolog 7, found in Brucella melitensis biotype 1 (strain ATCC 23456 / CCUG 17765 / NCTC 10094 / 16M).